The primary structure comprises 352 residues: tRNA pseudouridine synthase D (352 aa).

Residue Asp-81 is the Nucleophile of the active site. Residues 157–303 (GVPNYFGTQR…MDHERRILRL (147 aa)) enclose the TRUD domain.

Belongs to the pseudouridine synthase TruD family.

It carries out the reaction uridine(13) in tRNA = pseudouridine(13) in tRNA. Responsible for synthesis of pseudouridine from uracil-13 in transfer RNAs. This is tRNA pseudouridine synthase D from Pseudomonas putida (strain ATCC 700007 / DSM 6899 / JCM 31910 / BCRC 17059 / LMG 24140 / F1).